The chain runs to 138 residues: Small ribosomal subunit protein uS11c (138 aa).

This sequence belongs to the universal ribosomal protein uS11 family. As to quaternary structure, part of the 30S ribosomal subunit.

It localises to the plastid. Its subcellular location is the chloroplast. This is Small ribosomal subunit protein uS11c from Phalaenopsis aphrodite subsp. formosana (Moth orchid).